A 486-amino-acid chain; its full sequence is Acetyl-coenzyme A carboxylase carboxyl transferase subunit beta, chloroplastic (486 aa).

The CoA carboxyltransferase N-terminal domain maps to 224-486 (LWVQCENCYG…FQFHGFFPRP (263 aa)). Residues Cys228, Cys231, Cys247, and Cys250 each coordinate Zn(2+). The C4-type zinc finger occupies 228–250 (CENCYGLNYKKFFSSKMNICEQC).

Belongs to the AccD/PCCB family. In terms of assembly, acetyl-CoA carboxylase is a heterohexamer composed of biotin carboxyl carrier protein, biotin carboxylase and 2 subunits each of ACCase subunit alpha and ACCase plastid-coded subunit beta (accD). It depends on Zn(2+) as a cofactor.

The protein resides in the plastid. It is found in the chloroplast stroma. The enzyme catalyses N(6)-carboxybiotinyl-L-lysyl-[protein] + acetyl-CoA = N(6)-biotinyl-L-lysyl-[protein] + malonyl-CoA. It functions in the pathway lipid metabolism; malonyl-CoA biosynthesis; malonyl-CoA from acetyl-CoA: step 1/1. Its function is as follows. Component of the acetyl coenzyme A carboxylase (ACC) complex. Biotin carboxylase (BC) catalyzes the carboxylation of biotin on its carrier protein (BCCP) and then the CO(2) group is transferred by the transcarboxylase to acetyl-CoA to form malonyl-CoA. The chain is Acetyl-coenzyme A carboxylase carboxyl transferase subunit beta, chloroplastic from Nymphaea alba (White water-lily).